Consider the following 111-residue polypeptide: Nucleoid-associated protein CYB_2894 (111 aa).

The protein belongs to the YbaB/EbfC family. Homodimer.

It is found in the cytoplasm. Its subcellular location is the nucleoid. Binds to DNA and alters its conformation. May be involved in regulation of gene expression, nucleoid organization and DNA protection. The polypeptide is Nucleoid-associated protein CYB_2894 (Synechococcus sp. (strain JA-2-3B'a(2-13)) (Cyanobacteria bacterium Yellowstone B-Prime)).